Consider the following 135-residue polypeptide: UPF0355 protein SAV0387 (135 aa).

The protein belongs to the UPF0355 family.

The protein is UPF0355 protein SAV0387 of Staphylococcus aureus (strain Mu50 / ATCC 700699).